The chain runs to 544 residues: L-aspartate oxidase (544 aa).

Residues 17-20, Lys-39, 46-53, and Asp-221 each bind FAD; these read SGGA and STFYAQGG. Arg-288 serves as the catalytic Proton donor/acceptor. FAD contacts are provided by residues Glu-373 and 389–390; that span reads SL.

Belongs to the FAD-dependent oxidoreductase 2 family. NadB subfamily. Requires FAD as cofactor.

The protein localises to the cytoplasm. It catalyses the reaction L-aspartate + O2 = iminosuccinate + H2O2. The protein operates within cofactor biosynthesis; NAD(+) biosynthesis; iminoaspartate from L-aspartate (oxidase route): step 1/1. In terms of biological role, catalyzes the oxidation of L-aspartate to iminoaspartate, the first step in the de novo biosynthesis of NAD(+). In Acinetobacter baylyi (strain ATCC 33305 / BD413 / ADP1), this protein is L-aspartate oxidase.